A 211-amino-acid polypeptide reads, in one-letter code: Interleukin-6 (211 aa).

An N-terminal signal peptide occupies residues 1 to 25 (MNSLSTSTFSPVAFSLGLLLVMATA). An intrachain disulfide couples Cys71 to Cys77. Ser80 bears the Phosphoserine mark. Cys100 and Cys110 are oxidised to a cystine.

This sequence belongs to the IL-6 superfamily. As to quaternary structure, component of a hexamer of two molecules each of IL6, IL6R and IL6ST; first binds to IL6R to associate with the signaling subunit IL6ST. Interacts with IL6R (via the N-terminal ectodomain); this interaction may be affected by IL6R-binding with SORL1, hence decreasing IL6 cis signaling. Interacts with SORL1 (via the N-terminal ectodomain); this interaction leads to IL6 internalization and lysosomal degradation. May form a trimeric complex with the soluble SORL1 ectodomain and soluble IL6R receptor; this interaction might stabilize circulating IL6, hence promoting IL6 trans signaling.

The protein localises to the secreted. Its function is as follows. Cytokine with a wide variety of biological functions in immunity, tissue regeneration, and metabolism. Binds to IL6R, then the complex associates to the signaling subunit IL6ST/gp130 to trigger the intracellular IL6-signaling pathway. The interaction with the membrane-bound IL6R and IL6ST stimulates 'classic signaling', whereas the binding of IL6 and soluble IL6R to IL6ST stimulates 'trans-signaling'. Alternatively, 'cluster signaling' occurs when membrane-bound IL6:IL6R complexes on transmitter cells activate IL6ST receptors on neighboring receiver cells. IL6 is a potent inducer of the acute phase response. Rapid production of IL6 contributes to host defense during infection and tissue injury, but excessive IL6 synthesis is involved in disease pathology. In the innate immune response, is synthesized by myeloid cells, such as macrophages and dendritic cells, upon recognition of pathogens through toll-like receptors (TLRs) at the site of infection or tissue injury. In the adaptive immune response, is required for the differentiation of B cells into immunoglobulin-secreting cells. Plays a major role in the differentiation of CD4(+) T cell subsets. Essential factor for the development of T follicular helper (Tfh) cells that are required for the induction of germinal-center formation. Required to drive naive CD4(+) T cells to the Th17 lineage. Also required for proliferation of myeloma cells and the survival of plasmablast cells. In terms of biological role, acts as an essential factor in bone homeostasis and on vessels directly or indirectly by induction of VEGF, resulting in increased angiogenesis activity and vascular permeability. Induces, through 'trans-signaling' and synergistically with IL1B and TNF, the production of VEGF. Involved in metabolic controls, is discharged into the bloodstream after muscle contraction increasing lipolysis and improving insulin resistance. 'Trans-signaling' in central nervous system also regulates energy and glucose homeostasis. Mediates, through GLP-1, crosstalk between insulin-sensitive tissues, intestinal L cells and pancreatic islets to adapt to changes in insulin demand. Also acts as a myokine. Plays a protective role during liver injury, being required for maintenance of tissue regeneration. Also has a pivotal role in iron metabolism by regulating HAMP/hepcidin expression upon inflammation or bacterial infection. Through activation of IL6ST-YAP-NOTCH pathway, induces inflammation-induced epithelial regeneration. In Lama glama (Llama), this protein is Interleukin-6 (IL6).